We begin with the raw amino-acid sequence, 151 residues long: Transcriptional regulator MraZ (151 aa).

2 SpoVT-AbrB domains span residues 5 to 56 (THRH…PLPT) and 85 to 128 (SEEL…DAAR).

The protein belongs to the MraZ family. As to quaternary structure, forms oligomers.

It localises to the cytoplasm. It is found in the nucleoid. The chain is Transcriptional regulator MraZ from Acidithiobacillus ferrooxidans (strain ATCC 23270 / DSM 14882 / CIP 104768 / NCIMB 8455) (Ferrobacillus ferrooxidans (strain ATCC 23270)).